The sequence spans 1070 residues: DNA-directed RNA polymerase subunit beta (1070 aa).

This sequence belongs to the RNA polymerase beta chain family. In plastids the minimal PEP RNA polymerase catalytic core is composed of four subunits: alpha, beta, beta', and beta''. When a (nuclear-encoded) sigma factor is associated with the core the holoenzyme is formed, which can initiate transcription.

Its subcellular location is the plastid. The protein localises to the chloroplast. It catalyses the reaction RNA(n) + a ribonucleoside 5'-triphosphate = RNA(n+1) + diphosphate. DNA-dependent RNA polymerase catalyzes the transcription of DNA into RNA using the four ribonucleoside triphosphates as substrates. The sequence is that of DNA-directed RNA polymerase subunit beta from Spinacia oleracea (Spinach).